A 398-amino-acid polypeptide reads, in one-letter code: Phosphoglycerate kinase (398 aa).

Substrate-binding positions include 21 to 23, Arg-36, 59 to 62, Arg-117, and Arg-150; these read DFN and HFGR. ATP-binding positions include Lys-200, Glu-321, and 351–354; that span reads GGDS.

Belongs to the phosphoglycerate kinase family. Monomer.

The protein resides in the cytoplasm. It catalyses the reaction (2R)-3-phosphoglycerate + ATP = (2R)-3-phospho-glyceroyl phosphate + ADP. It functions in the pathway carbohydrate degradation; glycolysis; pyruvate from D-glyceraldehyde 3-phosphate: step 2/5. In Wolbachia sp. subsp. Drosophila simulans (strain wRi), this protein is Phosphoglycerate kinase.